Reading from the N-terminus, the 235-residue chain is 2-C-methyl-D-erythritol 4-phosphate cytidylyltransferase (235 aa).

It belongs to the IspD/TarI cytidylyltransferase family. IspD subfamily.

It carries out the reaction 2-C-methyl-D-erythritol 4-phosphate + CTP + H(+) = 4-CDP-2-C-methyl-D-erythritol + diphosphate. Its pathway is isoprenoid biosynthesis; isopentenyl diphosphate biosynthesis via DXP pathway; isopentenyl diphosphate from 1-deoxy-D-xylulose 5-phosphate: step 2/6. Functionally, catalyzes the formation of 4-diphosphocytidyl-2-C-methyl-D-erythritol from CTP and 2-C-methyl-D-erythritol 4-phosphate (MEP). The polypeptide is 2-C-methyl-D-erythritol 4-phosphate cytidylyltransferase (Pseudomonas fluorescens (strain ATCC BAA-477 / NRRL B-23932 / Pf-5)).